The sequence spans 152 residues: Large ribosomal subunit protein bL9 (152 aa).

The protein belongs to the bacterial ribosomal protein bL9 family.

Functionally, binds to the 23S rRNA. This Nostoc punctiforme (strain ATCC 29133 / PCC 73102) protein is Large ribosomal subunit protein bL9.